A 339-amino-acid chain; its full sequence is DNA-directed RNA polymerase subunit alpha (339 aa).

An alpha N-terminal domain (alpha-NTD) region spans residues 1–233; the sequence is MVREEITGST…DLFLPFIHTE (233 aa). The alpha C-terminal domain (alpha-CTD) stretch occupies residues 266 to 339; sequence GIPLNCIFID…IDLPKNKFSL (74 aa).

This sequence belongs to the RNA polymerase alpha chain family. In terms of assembly, in plastids the minimal PEP RNA polymerase catalytic core is composed of four subunits: alpha, beta, beta', and beta''. When a (nuclear-encoded) sigma factor is associated with the core the holoenzyme is formed, which can initiate transcription.

The protein resides in the plastid. It is found in the chloroplast. It catalyses the reaction RNA(n) + a ribonucleoside 5'-triphosphate = RNA(n+1) + diphosphate. DNA-dependent RNA polymerase catalyzes the transcription of DNA into RNA using the four ribonucleoside triphosphates as substrates. This chain is DNA-directed RNA polymerase subunit alpha, found in Saccharum hybrid (Sugarcane).